Consider the following 206-residue polypeptide: Enterobactin synthase component D (206 aa).

Mg(2+) contacts are provided by Asp107, Glu109, and Glu152.

It belongs to the P-Pant transferase superfamily. EntD family. In terms of assembly, entB, EntD, EntE, and EntF form a multienzyme complex called enterobactin synthase. Mg(2+) serves as cofactor.

Its subcellular location is the membrane. The catalysed reaction is apo-[aryl-carrier protein] + CoA = holo-[aryl-carrier protein] + adenosine 3',5'-bisphosphate + H(+). It carries out the reaction apo-[peptidyl-carrier protein] + CoA = holo-[peptidyl-carrier protein] + adenosine 3',5'-bisphosphate + H(+). Its pathway is siderophore biosynthesis; enterobactin biosynthesis. In terms of biological role, involved in the biosynthesis of the siderophore enterobactin (enterochelin), which is a macrocyclic trimeric lactone of N-(2,3-dihydroxybenzoyl)-serine. The serine trilactone serves as a scaffolding for the three catechol functionalities that provide hexadentate coordination for the tightly ligated iron(2+) atoms. Plays an essential role in the assembly of the enterobactin by catalyzing the transfer of the 4'-phosphopantetheine (Ppant) moiety from coenzyme A to the apo-domains of both EntB (ArCP domain) and EntF (PCP domain) to yield their holo-forms which make them competent for the activation of 2,3-dihydroxybenzoate (DHB) and L-serine, respectively. In Escherichia coli O157:H7, this protein is Enterobactin synthase component D.